A 293-amino-acid polypeptide reads, in one-letter code: Protease HtpX (293 aa).

A run of 2 helical transmembrane segments spans residues 4–24 (IALF…VLSL) and 34–54 (GLMI…LLMS). Histidine 139 is a binding site for Zn(2+). Glutamate 140 is an active-site residue. Histidine 143 lines the Zn(2+) pocket. The next 2 helical transmembrane spans lie at 158–178 (VVNT…AGFM) and 193–213 (LIYF…ASII). Glutamate 222 serves as a coordination point for Zn(2+).

The protein belongs to the peptidase M48B family. Zn(2+) serves as cofactor.

It localises to the cell inner membrane. This is Protease HtpX from Escherichia fergusonii (strain ATCC 35469 / DSM 13698 / CCUG 18766 / IAM 14443 / JCM 21226 / LMG 7866 / NBRC 102419 / NCTC 12128 / CDC 0568-73).